Reading from the N-terminus, the 2382-residue chain is Serine/threonine-protein kinase WNK1 (2382 aa).

Disordered stretches follow at residues 1–81 and 95–203; these read MSGG…RFFR and LPGL…QQDD. Phosphoserine occurs at positions 15 and 19. A compositionally biased stretch (basic and acidic residues) spans 50–66; sequence RTEEYRRRRHTMDKDSR. Position 60 is a phosphothreonine (threonine 60). 2 stretches are compositionally biased toward low complexity: residues 95 to 108 and 125 to 153; these read LPGLPLSLPQPSIP and VTATATSQVAQQPPAAAAPGEQAVAGPAP. Phosphoserine is present on residues serine 167 and serine 174. The Protein kinase domain occupies 221 to 479; it reads LKFDIEIGRG…IKDLLNHAFF (259 aa). Serine 231 serves as a coordination point for ATP. Chloride-binding residues include phenylalanine 283 and leucine 299. Residues 301-304 and lysine 351 contribute to the ATP site; that span reads TELM. Aspartate 368 acts as the Proton acceptor in catalysis. 2 residues coordinate chloride: leucine 369 and leucine 371. Phosphoserine; by autocatalysis occurs at positions 378 and 382. Residues 488–555 are autoinhibitory domain; it reads ELAEEDDGEK…VCEGDHKTMA (68 aa). Positions 573 to 588 are enriched in basic and acidic residues; sequence QLVREEQEKKKQEESS. 3 disordered regions span residues 573-779, 1018-1041, and 1053-1119; these read QLVR…QPQA, QPGGSLAQAPTTSSQQAVLESTQG, and VAQT…SRPK. A compositionally biased stretch (polar residues) spans 598 to 614; that stretch reads ASQTGIKQLPSASTGIP. Residues 615-625 are compositionally biased toward low complexity; sequence TASTTSASVST. The interval 628–638 is interaction with KLHL3; the sequence is EPEEPEADQHQ. Positions 637–689 are enriched in polar residues; sequence HQQLQYQQPSISVLSDGTVDSGQGSSVFTESRVSSQQTVSYGSQHEQAHSTGT. The segment covering 709-779 has biased composition (low complexity); sequence PPSSVAQGQS…TAQPVSQPQA (71 aa). Positions 1025-1041 are enriched in polar residues; it reads QAPTTSSQQAVLESTQG. Over residues 1053–1077 the composition is skewed to low complexity; it reads VAQTQATQPTTLASSVDSAHSDVAS. The segment covering 1080–1090 has biased composition (polar residues); it reads SDGNENVPSSS. A compositionally biased stretch (basic residues) spans 1098-1119; that stretch reads TKRHYRKSVRSRSRHEKTSRPK. The RFXV motif 1 signature appears at 1257-1260; sequence RFIV. Serine 1261 bears the Phosphoserine mark. Low complexity-rich tracts occupy residues 1457–1467 and 1733–1745; these read SASAGGSTATP and QVSTPVSTTTSGV. Disordered stretches follow at residues 1457-1476 and 1733-1790; these read SASAGGSTATPGPKPPAVVS and QVST…TQSQ. Threonine 1848 is subject to Phosphothreonine. Positions 1859–1862 match the RFXV motif 2 motif; that stretch reads RFQV. The tract at residues 1866 to 1948 is disordered; that stretch reads ADGAQKEGKN…QPTKVGRFQV (83 aa). The segment covering 1869–1884 has biased composition (basic and acidic residues); sequence AQKEGKNKSEDAKSVH. Residues 1887 to 1905 are compositionally biased toward low complexity; sequence SSTSESSVLSSSSPESTLV. A compositionally biased stretch (polar residues) spans 1927 to 1940; the sequence is KTTASEAKSDTGQP. 2 short sequence motifs (RFXV motif) span residues 1945-1948 and 1957-1960; these read RFQV and RFSV. A phosphoserine mark is found at serine 1978, serine 2002, serine 2011, serine 2012, serine 2027, serine 2029, and serine 2032. Residues 1994–2003 show a composition bias toward basic and acidic residues; the sequence is PKKEKPELSE. Disordered stretches follow at residues 1994 to 2069 and 2101 to 2196; these read PKKE…DIED and LYTK…NLYS. Positions 2035 to 2062 are enriched in low complexity; the sequence is QLSSKSLPSQNLSQSLSNSFNSSYMSSD. The residue at position 2121 (serine 2121) is a Phosphoserine. Basic residues predominate over residues 2122–2134; the sequence is GRRRRPTKSKGSK. Residues 2135–2145 are compositionally biased toward low complexity; sequence SSRSSSLGNKS. Composition is skewed to polar residues over residues 2146 to 2167 and 2175 to 2196; these read PQLSGNLSGQSAASVLHPQQTL and ESGQNQLLQPLKPSPSSDNLYS. The segment at 2241-2261 is amphipathic alpha-helix; sequence SRKGTFTDDLHKLVDNWARDA. Residues serine 2270 and serine 2286 each carry the phosphoserine modification. A disordered region spans residues 2332–2352; it reads PFGAQWSGTGGPAPQPLGQFQ. A phosphoserine mark is found at serine 2370 and serine 2372.

This sequence belongs to the protein kinase superfamily. Ser/Thr protein kinase family. WNK subfamily. Interacts with WNK3. Interacts with WNK4; inhibiting the activity of WNK4. Interacts with SGK1; promoting its activation. Associates with the mTORC2 complex. Interacts with UVRAG. Interacts (via amphipathic alpha-helix region) with EMC2; promoting the ER membrane protein complex assembly. In terms of assembly, interacts with isoform 1; inhibiting isoform 1 activity. Requires Mg(2+) as cofactor. Autophosphorylated at Ser-378 and Ser-382, promoting its activity. Autophosphorylation at Ser-382 is inhibited by intracellular calcium. Phosphorylation at Thr-60 increases ability to activate SGK1. Post-translationally, ubiquitinated by the BCR(KLHL3) complex, leading to its degradation. Also ubiquitinated by the BCR(KLHL2) complex. In terms of processing, may be O-glycosylated. In terms of tissue distribution, widely expressed, with highest levels observed in the testis, heart, kidney and skeletal muscle. Strong expression in dorsal root ganglia and spinal cord. As to expression, this isoform is kidney-specific and specifically expressed in the distal convoluted tubule (DCT) and connecting tubule (CNT) of the nephron.

The protein resides in the cytoplasm. The protein localises to the nucleus. Its subcellular location is the cytoskeleton. It localises to the spindle. The enzyme catalyses L-seryl-[protein] + ATP = O-phospho-L-seryl-[protein] + ADP + H(+). It catalyses the reaction L-threonyl-[protein] + ATP = O-phospho-L-threonyl-[protein] + ADP + H(+). Activated in response to hyperosmotic stress: cell shrinkage promotes formation of a membraneless compartment that concentrates WNK1 with its substrates, OXSR1/OSR1 and STK39/SPAK. Activation requires autophosphorylation of Ser-382 and, to a lower extent, Ser-378. Autophosphorylation and subsequent activation is inhibited by increases in intracellular ionic strength: Cl(-) potently inhibits WNK1 kinase activity via direct binding. Also inhibited by K(+) ions. Inhibited by small compounds staurosporine, tyrphostin 47, as well as Src tyrosine kinase inhibitors PP1 and PP2. In terms of biological role, serine/threonine-protein kinase component of the WNK1-SPAK/OSR1 kinase cascade, which acts as a key regulator of blood pressure and regulatory volume increase by promoting ion influx. WNK1 mediates regulatory volume increase in response to hyperosmotic stress by acting as a molecular crowding sensor, which senses cell shrinkage and mediates formation of a membraneless compartment by undergoing liquid-liquid phase separation. The membraneless compartment concentrates WNK1 with its substrates, OXSR1/OSR1 and STK39/SPAK, promoting WNK1-dependent phosphorylation and activation of downstream kinases OXSR1/OSR1 and STK39/SPAK. Following activation, OXSR1/OSR1 and STK39/SPAK catalyze phosphorylation of ion cotransporters SLC12A1/NKCC2, SLC12A2/NKCC1, SLC12A5/KCC2 and SLC12A6/KCC3, regulating their activity. Phosphorylation of Na-K-Cl cotransporters SLC12A2/NKCC1 and SLC12A2/NKCC1 promote their activation and ion influx; simultaneously, phosphorylation of K-Cl cotransporters SLC12A5/KCC2 and SLC12A6/KCC3 inhibit their activity, blocking ion efflux. Also acts as a regulator of angiogenesis in endothelial cells via activation of OXSR1/OSR1 and STK39/SPAK: activation of OXSR1/OSR1 regulates chemotaxis and invasion, while STK39/SPAK regulates endothelial cell proliferation. Also acts independently of the WNK1-SPAK/OSR1 kinase cascade by catalyzing phosphorylation of other substrates, such as SYT2, PCF11 and NEDD4L. Mediates phosphorylation of SYT2, regulating SYT2 association with phospholipids and membrane-binding. Regulates mRNA export in the nucleus by mediating phosphorylation of PCF11, thereby decreasing the association between PCF11 and POLR2A/RNA polymerase II and promoting mRNA export to the cytoplasm. Acts as a negative regulator of autophagy. Required for the abscission step during mitosis, independently of the WNK1-SPAK/OSR1 kinase cascade. May also play a role in actin cytoskeletal reorganization. Also acts as a scaffold protein independently of its protein kinase activity: negatively regulates cell membrane localization of various transporters and channels, such as SLC4A4, SLC26A6, SLC26A9, TRPV4 and CFTR. Involved in the regulation of epithelial Na(+) channel (ENaC) by promoting activation of SGK1 in a kinase-independent manner: probably acts as a scaffold protein that promotes the recruitment of SGK1 to the mTORC2 complex in response to chloride, leading to mTORC2-dependent phosphorylation and activation of SGK1. Acts as an assembly factor for the ER membrane protein complex independently of its protein kinase activity: associates with EMC2 in the cytoplasm via its amphipathic alpha-helix, and prevents EMC2 ubiquitination and subsequent degradation, thereby promoting EMC2 stabilization. Its function is as follows. Kinase-defective isoform specifically expressed in kidney, which acts as a dominant-negative regulator of the longer isoform 1. Does not directly inhibit WNK4 and has no direct effect on sodium and chloride ion transport. Down-regulates sodium-chloride cotransporter activity indirectly by inhibiting isoform 1, it associates with isoform 1 and attenuates its kinase activity. In kidney, may play an important role regulating sodium and potassium balance. In Homo sapiens (Human), this protein is Serine/threonine-protein kinase WNK1.